A 133-amino-acid polypeptide reads, in one-letter code: uncharacterized protein (133 aa).

2 helical membrane passes run 13-33 (FLLS…LFLS) and 73-93 (FGNP…LLLL).

It localises to the membrane. This is an uncharacterized protein from Saccharomyces cerevisiae (strain ATCC 204508 / S288c) (Baker's yeast).